Reading from the N-terminus, the 484-residue chain is Major extracellular endoglucanase (484 aa).

The first 25 residues, 1–25 (MSIFRTASTLALATALALAAGPAFS), serve as a signal peptide directing secretion. Residue Glu182 is the Proton donor of the active site. The Nucleophile role is filled by Glu303. The tract at residues 370-402 (GTAGNTTPTPTPTPTPTPTPTPTPTPTPTPGTS) is disordered. Residues 375–399 (TTPTPTPTPTPTPTPTPTPTPTPTP) are thr-Pro repeats ('hinge') (Pro-Thr box). Residues 378–398 (TPTPTPTPTPTPTPTPTPTPT) are compositionally biased toward pro residues. The 90-residue stretch at 395–484 (PTPTPGTSTF…TAEFGFCAAS (90 aa)) folds into the CBM2 domain.

Belongs to the glycosyl hydrolase 5 (cellulase A) family.

It carries out the reaction Endohydrolysis of (1-&gt;4)-beta-D-glucosidic linkages in cellulose, lichenin and cereal beta-D-glucans.. This is Major extracellular endoglucanase (engXCA) from Xanthomonas campestris pv. campestris (strain ATCC 33913 / DSM 3586 / NCPPB 528 / LMG 568 / P 25).